We begin with the raw amino-acid sequence, 786 residues long: Toll-like receptor 1 (786 aa).

The signal sequence occupies residues 1–24 (MTSIFHFAIIFMLILQIRIQLSEE). Topologically, residues 25–580 (SEFLVDRSKN…HMSELSCNIT (556 aa)) are extracellular. Asparagine 51 carries an N-linked (GlcNAc...) asparagine glycan. LRR repeat units follow at residues 54–77 (QNYI…LIIS), 78–101 (HNRI…LDLS), 102–125 (HNKL…SFNA), 126–150 (FDAL…STTH), 151–175 (LEKS…GETY), 176–199 (GEKE…FPTN), 200–223 (KEFH…NIKC), 224–250 (VLED…SNLT), 251–278 (LNNI…YFSI), 279–308 (SNVK…HQVV), 309–337 (SDVF…SGTR), 338–361 (MVHM…NLLT), 362–388 (DTVF…KELS), 389–414 (KIAE…SYDE), 415–437 (KKGD…ILTD), 438–457 (TIFR…SNKI), 458–478 (KSIP…VAFN), 479–500 (SLTD…IDHN), and 501–524 (SVSH…AGDN). A disulfide bridge links cysteine 110 with cysteine 132. Asparagine 137 and asparagine 163 each carry an N-linked (GlcNAc...) asparagine glycan. An intrachain disulfide couples cysteine 223 to cysteine 230. The tract at residues 313 to 316 (GFPQ) is interaction with bacterial lipopeptide. Asparagine 330 carries N-linked (GlcNAc...) asparagine glycosylation. Residues cysteine 343 and cysteine 368 are joined by a disulfide bond. Residues cysteine 419 and cysteine 442 are joined by a disulfide bond. An N-linked (GlcNAc...) asparagine glycan is attached at asparagine 429. Residues 525–579 (PFQCTCELGEFVKNIDQVSSEVLEGWPDSYKCDYPESYRGTLLKDFHMSELSCNI) form the LRRCT domain. An N-linked (GlcNAc...) asparagine glycan is attached at asparagine 578. The helical transmembrane segment at 581 to 601 (LLIVTIVATMLVLAVTVTSLC) threads the bilayer. Over 602 to 786 (SYLDLPWYLR…NIKLTEQAKK (185 aa)) the chain is Cytoplasmic. A TIR domain is found at 635-776 (LQFHAFISYS…LFWANLRAAI (142 aa)).

This sequence belongs to the Toll-like receptor family. Interacts (via extracellular domain) with TLR2. TLR2 seems to exist in heterodimers with either TLR1 or TLR6 before stimulation by the ligand. The heterodimers form bigger oligomers in response to their corresponding ligands as well as further heterotypic associations with other receptors such as CD14 and/or CD36. The activation cluster TLR2:TLR1:CD14 forms in response to triacylated lipopeptides. Binds MYD88 (via TIR domain). Interacts with CNPY3. Interacts with neutrophil recruitment protein from Aedes aegypti saliva; the interaction probably promotes activation of canonical NF-kappa-B signaling in skin-resident macrophages and subsequent expression of neutrophil chemoattractants. Ubiquitous. Highly expressed in spleen, ovary, peripheral blood leukocytes, thymus and small intestine.

The protein resides in the cell membrane. Its subcellular location is the cytoplasmic vesicle. It is found in the phagosome membrane. The protein localises to the membrane raft. It localises to the golgi apparatus. Its function is as follows. Participates in the innate immune response to microbial agents. Specifically recognizes diacylated and triacylated lipopeptides. Cooperates with TLR2 to mediate the innate immune response to bacterial lipoproteins or lipopeptides. Forms the activation cluster TLR2:TLR1:CD14 in response to triacylated lipopeptides, this cluster triggers signaling from the cell surface and subsequently is targeted to the Golgi in a lipid-raft dependent pathway. Acts via MYD88 and TRAF6, leading to NF-kappa-B activation, cytokine secretion and the inflammatory response. This chain is Toll-like receptor 1 (TLR1), found in Homo sapiens (Human).